A 133-amino-acid chain; its full sequence is Large ribosomal subunit protein uL15 (133 aa).

The interval 1-62 (MALHNLQPAP…GQQPLQRRLP (62 aa)) is disordered. Over residues 32-45 (TRGQKGQKSRTGYS) the composition is skewed to polar residues.

The protein belongs to the universal ribosomal protein uL15 family. Part of the 50S ribosomal subunit.

Its function is as follows. Binds to the 23S rRNA. The protein is Large ribosomal subunit protein uL15 of Nitratiruptor sp. (strain SB155-2).